A 247-amino-acid polypeptide reads, in one-letter code: UPF0280 protein MMP1236 (247 aa).

This sequence belongs to the UPF0280 family.

In Methanococcus maripaludis (strain DSM 14266 / JCM 13030 / NBRC 101832 / S2 / LL), this protein is UPF0280 protein MMP1236.